A 463-amino-acid polypeptide reads, in one-letter code: Alpha-L-arabinofuranosidase B (463 aa).

Positions 1-26 (MIPQLNRNYAWAIALGLVARSSLVSA) are cleaved as a signal peptide. Positions 27 to 308 (GPCDIYASGG…ILGIGGHNSK (282 aa)) are catalytic. A disulfide bridge links C29 with C39. N81 carries N-linked (GlcNAc...) asparagine glycosylation. 2 cysteine pairs are disulfide-bonded: C89–C94 and C184–C185. Residue D227 participates in substrate binding. E229 functions as the Nucleophile in the catalytic mechanism. N230 contacts substrate. N280 is a glycosylation site (N-linked (GlcNAc...) asparagine). G304 contacts substrate. Positions 309-463 (LTVGSSISLR…VSWVVSASFA (155 aa)) are ABD. N332 carries an N-linked (GlcNAc...) asparagine glycan. A disulfide bridge connects residues C366 and C404. Positions 381, 383, 384, 428, 430, 433, and 453 each coordinate substrate.

This sequence belongs to the glycosyl hydrolase 54 family. Residue Asn-280 is mannosylated with up to 7 mannose residues.

Its subcellular location is the secreted. The enzyme catalyses Hydrolysis of terminal non-reducing alpha-L-arabinofuranoside residues in alpha-L-arabinosides.. The protein operates within glycan metabolism; L-arabinan degradation. Secreted alpha-L-arabinofuranosidase that actively hydrolyzes p-NP-alpha-L-arabinofuranoside and is specific for furanose configuration of the carbohydrate ring. Also exhibits significant activity against polymeric arabinose-containing substrates such as arabinan and arabinoxylan, a major component of plant hemicellulose. This Penicillium canescens protein is Alpha-L-arabinofuranosidase B (abfB).